The sequence spans 96 residues: Large ribosomal subunit protein uL23 (96 aa).

It belongs to the universal ribosomal protein uL23 family. As to quaternary structure, part of the 50S ribosomal subunit. Contacts protein L29, and trigger factor when it is bound to the ribosome.

Its function is as follows. One of the early assembly proteins it binds 23S rRNA. One of the proteins that surrounds the polypeptide exit tunnel on the outside of the ribosome. Forms the main docking site for trigger factor binding to the ribosome. This Caldanaerobacter subterraneus subsp. tengcongensis (strain DSM 15242 / JCM 11007 / NBRC 100824 / MB4) (Thermoanaerobacter tengcongensis) protein is Large ribosomal subunit protein uL23.